The primary structure comprises 474 residues: Calcitonin receptor (474 aa).

Residues 1–24 form the signal peptide; the sequence is MRFTFTSRCLALFLLLNHPTPILP. Over 25-146 the chain is Extracellular; that stretch reads AFSNQTYPTI…FTPEKLKNAY (122 aa). 4 N-linked (GlcNAc...) asparagine glycosylation sites follow: asparagine 28, asparagine 73, asparagine 125, and asparagine 130. 3 disulfide bridges follow: cysteine 55/cysteine 81, cysteine 72/cysteine 112, and cysteine 95/cysteine 134. The chain crosses the membrane as a helical span at residues 147–169; sequence VLYYLAIVGHSLSIFTLVISLGI. Over 170-181 the chain is Cytoplasmic; sequence FVFFRSLGCQRV. The chain crosses the membrane as a helical span at residues 182-202; the sequence is TLHKNMFLTYILNSMIIIIHL. Topologically, residues 203–219 are extracellular; sequence VEVVPNGELVRRDPVSC. Cysteine 219 and cysteine 289 form a disulfide bridge. The helical transmembrane segment at 220–242 threads the bilayer; it reads KILHFFHQYMMACNYFWMLCEGI. The Cytoplasmic portion of the chain corresponds to 243–259; sequence YLHTLIVVAVFTEKQRL. Residues 260–280 traverse the membrane as a helical segment; it reads RWYYLLGWGFPLVPTTIHAIT. The Extracellular portion of the chain corresponds to 281 to 296; sequence RAVYFNDNCWLSVETH. The chain crosses the membrane as a helical span at residues 297–320; that stretch reads LLYIIHGPVMAALVVNFFFLLNIV. Residues 321-340 lie on the Cytoplasmic side of the membrane; sequence RVLVTKMRETHEAESHMYLK. The chain crosses the membrane as a helical span at residues 341 to 359; the sequence is AVKATMILVPLLGIQFVVF. The Extracellular segment spans residues 360–367; sequence PWRPSNKM. The chain crosses the membrane as a helical span at residues 368–394; sequence LGKIYDYVMHSLIHFQGFFVATIYCFC. Over 395–474 the chain is Cytoplasmic; sequence NNEVQTTVKR…LNIIEQESSA (80 aa).

Belongs to the G-protein coupled receptor 2 family. Heterodimer of CALCR and RAMP1, RAMP2 or RAMP3; the receptor complexes function as AMYR1, AMYR2 and AMYR3 receptors, respectively, and respond to amylin/IAPP, calcitonin/CT and CGRP1 ligands. Interacts with GPRASP2.

It localises to the cell membrane. Sensitive to cholera toxin. G protein-coupled receptor activated by ligand peptides amylin (IAPP), calcitonin (CT/CALCA) and calcitonin gene-related peptide type 1 (CGRP1/CALCA). CALCR interacts with receptor-activity-modifying proteins RAMP1, 2 and 3 to form receptor complexes AMYR1, 2 and 3, respectively. IAPP, CT and CGRP1 activate CALCR and AMYRs with distinct modes of receptor activation resulting in specific phenotypes. Ligand binding causes a conformation change that triggers signaling via guanine nucleotide-binding proteins (G proteins) and modulates the activity of downstream effectors. Activates cAMP-dependent pathway. Its function is as follows. Non-functional protein. Unable to couple to G proteins and activate adenylyl cyclase. Does not undergo receptor internalization following ligand binding. In Homo sapiens (Human), this protein is Calcitonin receptor.